The chain runs to 492 residues: Katanin p60 ATPase-containing subunit A1 (492 aa).

The disordered stretch occupies residues 91 to 158; the sequence is PAHDGEVWSL…MKPVRAREKK (68 aa). Over residues 138-147 the composition is skewed to polar residues; that stretch reads LPSSKNTNNV. 250 to 257 contributes to the ATP binding site; the sequence is GPPGTGKT.

Belongs to the AAA ATPase family. Katanin p60 subunit A1 subfamily. In terms of assembly, can homooligomerize into hexameric rings, which may be promoted by interaction with microtubules. Interacts with katnb1, which may serve as a targeting subunit.

The protein resides in the cytoplasm. It localises to the cytoskeleton. Its subcellular location is the microtubule organizing center. It is found in the centrosome. The protein localises to the spindle pole. The protein resides in the spindle. The catalysed reaction is n ATP + n H2O + a microtubule = n ADP + n phosphate + (n+1) alpha/beta tubulin heterodimers.. ATPase activity is stimulated by microtubules, which promote homooligomerization. ATP-dependent microtubule severing is stimulated by interaction with katnb1. In terms of biological role, catalytic subunit of a complex which severs microtubules in an ATP-dependent manner. Microtubule severing may promote rapid reorganization of cellular microtubule arrays and the release of microtubules from the centrosome following nucleation. This is Katanin p60 ATPase-containing subunit A1 (katna1) from Xenopus tropicalis (Western clawed frog).